The sequence spans 281 residues: NADH-quinone oxidoreductase subunit B (281 aa).

Residues cysteine 37, cysteine 38, cysteine 103, and cysteine 132 each contribute to the [4Fe-4S] cluster site. Residues aspartate 242–proline 281 are disordered. The segment covering threonine 257 to proline 281 has biased composition (low complexity).

Belongs to the complex I 20 kDa subunit family. As to quaternary structure, NDH-1 is composed of 14 different subunits. Subunits NuoB, C, D, E, F, and G constitute the peripheral sector of the complex. [4Fe-4S] cluster serves as cofactor.

It is found in the cell membrane. The enzyme catalyses a quinone + NADH + 5 H(+)(in) = a quinol + NAD(+) + 4 H(+)(out). Functionally, NDH-1 shuttles electrons from NADH, via FMN and iron-sulfur (Fe-S) centers, to quinones in the respiratory chain. The immediate electron acceptor for the enzyme in this species is believed to be a menaquinone. Couples the redox reaction to proton translocation (for every two electrons transferred, four hydrogen ions are translocated across the cytoplasmic membrane), and thus conserves the redox energy in a proton gradient. The sequence is that of NADH-quinone oxidoreductase subunit B from Frankia alni (strain DSM 45986 / CECT 9034 / ACN14a).